Consider the following 85-residue polypeptide: Cell division topological specificity factor (85 aa).

This sequence belongs to the MinE family.

In terms of biological role, prevents the cell division inhibition by proteins MinC and MinD at internal division sites while permitting inhibition at polar sites. This ensures cell division at the proper site by restricting the formation of a division septum at the midpoint of the long axis of the cell. This Shewanella amazonensis (strain ATCC BAA-1098 / SB2B) protein is Cell division topological specificity factor.